The primary structure comprises 652 residues: Nucleolar GTP-binding protein 1 (652 aa).

The OBG-type G domain maps to 169-341; the sequence is RTIIICGFPN…VKTEACERLL (173 aa). GTP is bound by residues 175–182, 221–225, and 289–292; these read GFPNVGKS, DTPGI, and NKID. Residues 501 to 521 are disordered; sequence RLSSRKNKPVIPRNKQPKVRD.

Belongs to the TRAFAC class OBG-HflX-like GTPase superfamily. OBG GTPase family. NOG subfamily.

Its subcellular location is the nucleus. The protein resides in the nucleolus. In terms of biological role, involved in the biogenesis of the 60S ribosomal subunit. Required for normal assembly of the mitotic spindle. May be involved in both centrosome-dependent and centrosome-independent spindle assembly programs. Acts as a TP53 repressor, preventing TP53 stabilization and cell cycle arrest. This chain is Nucleolar GTP-binding protein 1, found in Drosophila melanogaster (Fruit fly).